Consider the following 1273-residue polypeptide: Kinesin-like protein KIN-14A (1273 aa).

Positions 1–52 are disordered; sequence MADQRSKTNRWNWEVSGFEPRKSSSNASFAESTGHRTTGPLLRRNSISTPSL. The stretch at 59-89 forms a coiled coil; the sequence is ASKVNGLKEKVKLAKEDYLELRQEATDLQEY. The Kinesin motor domain maps to 142–456; sequence NIKVFCRARP…LNYAARARNT (315 aa). ATP is bound at residue 223-230; that stretch reads GQTNAGKT. 3 coiled-coil regions span residues 466–511, 559–595, and 627–657; these read IKKW…CVLL, QLDQ…AVRS, and TKKL…RLTE. Disordered regions lie at residues 827 to 847 and 1136 to 1157; these read KPNT…RSPV and QEDT…SISS. The segment covering 830–846 has biased composition (low complexity); the sequence is TGRSKSTSRGSSPGRSP.

Belongs to the TRAFAC class myosin-kinesin ATPase superfamily. Kinesin family. KIN-14 subfamily. Homodimer and heterodimer with KCA2. Interacts with CDKA-1. Interacts with AL1, a geminivirus (TGMV) protein essential for viral replication. Interacts with LUE1/KSS. In terms of processing, part of the phosphorylation is not CDK-dependent. In terms of tissue distribution, widely expressed.

It is found in the nucleus. The protein localises to the cytoplasm. It localises to the cytoskeleton. The protein resides in the spindle. Its subcellular location is the chromosome. It is found in the cell membrane. The protein localises to the phragmoplast. Its function is as follows. Kinesin-like protein required for chloroplast movements and anchor to the plasma membrane. Mediates chloroplast movement via chloroplast actin (cp-actin) filaments. Required for the chloroplast avoidance response under high intensity blue light. Mediates redundantly with CHUP1 the nuclear avoidance response under high intensity blue light. May act as a mitotic kinesin. Probably involved in division plane determination. This is Kinesin-like protein KIN-14A from Arabidopsis thaliana (Mouse-ear cress).